Reading from the N-terminus, the 169-residue chain is uncharacterized protein (169 aa).

Positions 28–157 (ELHLVIHVCI…EFIPYFFLNQ (130 aa)) constitute a Nudix hydrolase domain. The Nudix box motif lies at 65-87 (AGSALKGETSQQAAEREVQEELG). Mg(2+) is bound by residues Glu81 and Glu85.

Belongs to the Nudix hydrolase family. Mg(2+) is required as a cofactor.

This is an uncharacterized protein from Listeria monocytogenes serovar 1/2a (strain ATCC BAA-679 / EGD-e).